The following is a 465-amino-acid chain: ATP-dependent protease ATPase subunit HslU (465 aa).

ATP-binding positions include V20, 62–67 (GVGKTE), D277, E343, and R415.

It belongs to the ClpX chaperone family. HslU subfamily. A double ring-shaped homohexamer of HslV is capped on each side by a ring-shaped HslU homohexamer. The assembly of the HslU/HslV complex is dependent on binding of ATP.

It is found in the cytoplasm. Functionally, ATPase subunit of a proteasome-like degradation complex; this subunit has chaperone activity. The binding of ATP and its subsequent hydrolysis by HslU are essential for unfolding of protein substrates subsequently hydrolyzed by HslV. HslU recognizes the N-terminal part of its protein substrates and unfolds these before they are guided to HslV for hydrolysis. The polypeptide is ATP-dependent protease ATPase subunit HslU (Geobacillus kaustophilus (strain HTA426)).